Here is a 327-residue protein sequence, read N- to C-terminus: MMSIYFWVAIHIFSSFWMIQNIEICDFSRGSLDVALMNNKILIDNNLKEENYNDNNIKHCVIFTKGLEIFTFICPKGNNNDNYKGVEIRPEQCFEKVRINGKEENLKDILKGVVIEKKETDTEIIRKALIPPTIYQDMSFECSCDNSLTIKDNYIGARGIMKVHLKKNIIFGCDFNYDSNEPKLSNGKSAFAQFYDKQVVDSNKNIICNTQVNNKEVYLGLVCPEGYGMYPENCFENVLFEKKVINITELIKHDVKLHIEKNKNISFASFILNPNENPKSFSCHCIKNNDNSFPLIANITFSNYESYSFNFHVTYLILIFILLISYI.

6-Cys domains follow at residues 21–168 (NIEI…LKKN) and 169–304 (IIFG…FSNY). Disulfide bonds link Cys25/Cys60, Cys74/Cys144, Cys93/Cys142, Cys173/Cys208, Cys223/Cys285, and Cys234/Cys283. N-linked (GlcNAc...) asparagine glycosylation is found at Asn246, Asn264, and Asn298.

It localises to the cell surface. The protein resides in the cell membrane. In Plasmodium berghei (strain Anka), this protein is Surface protein P12p (P12p).